We begin with the raw amino-acid sequence, 135 residues long: ATP synthase epsilon chain (135 aa).

Belongs to the ATPase epsilon chain family. As to quaternary structure, F-type ATPases have 2 components, CF(1) - the catalytic core - and CF(0) - the membrane proton channel. CF(1) has five subunits: alpha(3), beta(3), gamma(1), delta(1), epsilon(1). CF(0) has three main subunits: a, b and c.

Its subcellular location is the cell inner membrane. Functionally, produces ATP from ADP in the presence of a proton gradient across the membrane. This chain is ATP synthase epsilon chain, found in Nitrobacter winogradskyi (strain ATCC 25391 / DSM 10237 / CIP 104748 / NCIMB 11846 / Nb-255).